The following is a 459-amino-acid chain: ATP synthase subunit beta (459 aa).

ATP is bound at residue 148–155 (GGAGVGKT).

The protein belongs to the ATPase alpha/beta chains family. In terms of assembly, F-type ATPases have 2 components, CF(1) - the catalytic core - and CF(0) - the membrane proton channel. CF(1) has five subunits: alpha(3), beta(3), gamma(1), delta(1), epsilon(1). CF(0) has three main subunits: a(1), b(2) and c(9-12). The alpha and beta chains form an alternating ring which encloses part of the gamma chain. CF(1) is attached to CF(0) by a central stalk formed by the gamma and epsilon chains, while a peripheral stalk is formed by the delta and b chains.

It is found in the cell inner membrane. The enzyme catalyses ATP + H2O + 4 H(+)(in) = ADP + phosphate + 5 H(+)(out). Functionally, produces ATP from ADP in the presence of a proton gradient across the membrane. The catalytic sites are hosted primarily by the beta subunits. This chain is ATP synthase subunit beta, found in Thiobacillus denitrificans (strain ATCC 25259 / T1).